The primary structure comprises 356 residues: DNA polymerase IV (356 aa).

The region spanning 4–185 (IIHIDMDCYY…LALGKIPGVG (182 aa)) is the UmuC domain. Mg(2+) contacts are provided by Asp-8 and Asp-103. Glu-104 is an active-site residue.

This sequence belongs to the DNA polymerase type-Y family. As to quaternary structure, monomer. Mg(2+) serves as cofactor.

The protein localises to the cytoplasm. The catalysed reaction is DNA(n) + a 2'-deoxyribonucleoside 5'-triphosphate = DNA(n+1) + diphosphate. Functionally, poorly processive, error-prone DNA polymerase involved in untargeted mutagenesis. Copies undamaged DNA at stalled replication forks, which arise in vivo from mismatched or misaligned primer ends. These misaligned primers can be extended by PolIV. Exhibits no 3'-5' exonuclease (proofreading) activity. May be involved in translesional synthesis, in conjunction with the beta clamp from PolIII. This chain is DNA polymerase IV, found in Pseudoalteromonas atlantica (strain T6c / ATCC BAA-1087).